We begin with the raw amino-acid sequence, 340 residues long: ATPase BagA (340 aa).

8 residues coordinate ATP: Gly-31, Gly-33, Lys-34, Ser-35, Thr-36, Asn-240, Pro-316, and Val-318.

It belongs to the arsA ATPase family. BagA/BagB subfamily. As to quaternary structure, forms a heterodimer composed of BagA and BagB. Interacts with Rv1509. Also interacts with a large number of proteins, including proteins required for mycolic acid biosynthesis.

With respect to regulation, the ATPase activity of the BagAB complex is not stimulated by antimonite, an arsenite substitute, suggesting that BagAB is not a transporter for this family of elements. Functionally, component of the heterodimeric BagAB ATPase complex, whose two subunits are actively involved in ATP hydrolysis. The ATPase activity is required to mediate resistance against nitric oxide (NO) and elevated levels of glycerol. This is ATPase BagA from Mycobacterium tuberculosis (strain ATCC 25618 / H37Rv).